A 146-amino-acid chain; its full sequence is Acidic phospholipase A2 S14-72F (146 aa).

A signal peptide spans 1 to 19 (MYPAHLLVLLAVCVSLLGA). A propeptide spanning residues 20–27 (ASIPPQPL) is cleaved from the precursor. Cystine bridges form between C38–C98, C54–C145, C56–C72, C71–C126, C78–C119, C87–C112, and C105–C117. 3 residues coordinate Ca(2+): Y55, G57, and G59. The active site involves H75. Residue D76 participates in Ca(2+) binding. D120 is a catalytic residue.

Belongs to the phospholipase A2 family. Group I subfamily. D49 sub-subfamily. The cofactor is Ca(2+). Expressed by the venom gland.

The protein resides in the secreted. It catalyses the reaction a 1,2-diacyl-sn-glycero-3-phosphocholine + H2O = a 1-acyl-sn-glycero-3-phosphocholine + a fatty acid + H(+). Snake venom phospholipase A2 (PLA2) that inhibits collagen-induced platelet aggregation. PLA2 catalyzes the calcium-dependent hydrolysis of the 2-acyl groups in 3-sn-phosphoglycerides. This is Acidic phospholipase A2 S14-72F from Austrelaps superbus (Lowland copperhead snake).